Here is a 180-residue protein sequence, read N- to C-terminus: Signaling threshold-regulating transmembrane adapter 1 (180 aa).

At 1 to 24 the chain is on the extracellular side; that stretch reads MSRDYNCTTDDQLAWGIPSISHAW. An N-linked (GlcNAc...) asparagine glycan is attached at Asn-6. Residues 25-45 form a helical; Signal-anchor for type III membrane protein membrane-spanning segment; sequence GLWALLGVVTVLLLISLAALL. Topologically, residues 46-180 are cytoplasmic; the sequence is SQWTRGRRRN…AYANSQPAPS (135 aa). Phosphoserine is present on residues Ser-63 and Ser-66. Position 73 is a phosphotyrosine (Tyr-73). Residues 73–76 are interaction with GRB2; the sequence is YGNL. The interval 81 to 103 is disordered; that stretch reads TGRLSQEPRSEEQDPPSSGGLAR. Residues Ser-85 and Ser-90 each carry the phosphoserine modification. Tyr-111, Tyr-132, and Tyr-153 each carry phosphotyrosine. The interval 130–135 is interaction with PTPN11; sequence IKYCEV. The interaction with CSK stretch occupies residues 153 to 156; that stretch reads YASV. A Phosphoserine modification is found at Ser-166. Residue Tyr-172 is modified to Phosphotyrosine. The tract at residues 172–175 is interaction with GRB2; the sequence is YANS.

In terms of assembly, homodimer; disulfide-linked. When phosphorylated, interacts with PTPN11/SHP2, GRB2 and CSK. Phosphorylated on tyrosines upon TCR activation; which leads to the recruitment of PTPN11, GRB2 and CSK. As to expression, expressed in thymus and spleen, with highest levels in immature thymocytes (at protein level).

The protein resides in the cell membrane. Its function is as follows. Negatively regulates T-cell antigen receptor (TCR)-mediated signaling. Involved in positive selection of T-cells. The protein is Signaling threshold-regulating transmembrane adapter 1 (Sit1) of Mus musculus (Mouse).